The sequence spans 207 residues: ATP-dependent Clp protease proteolytic subunit 1 (207 aa).

Ser103 (nucleophile) is an active-site residue. Residue His128 is part of the active site.

Belongs to the peptidase S14 family. In terms of assembly, fourteen ClpP subunits assemble into 2 heptameric rings which stack back to back to give a disk-like structure with a central cavity, resembling the structure of eukaryotic proteasomes.

It is found in the cytoplasm. The catalysed reaction is Hydrolysis of proteins to small peptides in the presence of ATP and magnesium. alpha-casein is the usual test substrate. In the absence of ATP, only oligopeptides shorter than five residues are hydrolyzed (such as succinyl-Leu-Tyr-|-NHMec, and Leu-Tyr-Leu-|-Tyr-Trp, in which cleavage of the -Tyr-|-Leu- and -Tyr-|-Trp bonds also occurs).. In terms of biological role, cleaves peptides in various proteins in a process that requires ATP hydrolysis. Has a chymotrypsin-like activity. Plays a major role in the degradation of misfolded proteins. In Tropheryma whipplei (strain Twist) (Whipple's bacillus), this protein is ATP-dependent Clp protease proteolytic subunit 1.